Here is a 617-residue protein sequence, read N- to C-terminus: AUGMIN subunit 3 (617 aa).

3 coiled-coil regions span residues 107 to 140 (DATL…SSAL), 314 to 334 (LHSL…LYQK), and 481 to 504 (AIIQ…ENSL).

It belongs to the HAUS3 family. In terms of assembly, part of the augmin complex composed of 8 subunits. The complex acts on microtubules and interacts with gamma-tubulin in spindles and the phragmoplast. Interacts with AUG1.

It is found in the cytoplasm. Its subcellular location is the cytoskeleton. The protein localises to the spindle. It localises to the phragmoplast. Its function is as follows. Involved in microtubules reorganization during spindle and phragmoplast development. Required for gamma-tubulin localization during mitosis. The polypeptide is AUGMIN subunit 3 (Arabidopsis thaliana (Mouse-ear cress)).